Reading from the N-terminus, the 342-residue chain is Phenylalanine--tRNA ligase alpha subunit (342 aa).

Glutamate 260 is a binding site for Mg(2+).

This sequence belongs to the class-II aminoacyl-tRNA synthetase family. Phe-tRNA synthetase alpha subunit type 1 subfamily. Tetramer of two alpha and two beta subunits. Requires Mg(2+) as cofactor.

Its subcellular location is the cytoplasm. It carries out the reaction tRNA(Phe) + L-phenylalanine + ATP = L-phenylalanyl-tRNA(Phe) + AMP + diphosphate + H(+). In Nocardia farcinica (strain IFM 10152), this protein is Phenylalanine--tRNA ligase alpha subunit.